The sequence spans 617 residues: MDFSKLPKILDEDKESTFGYVHGVSGPVVTACDMAGAAMYELVRVGHSELVGEIIRLEGDMATIQVYEETSGVSVGDPVLRTGKPLSVELGPGIMGAIFDGIQRPLSDISSQTQSIYIPRGVNVSALSRDVKWEFTPSKNLRVGSHITGGDIYGIVNENSLIKHRIMLPPRNRGTVTYIAPPGNYDTSDVVLELEFEGVKEKFSMVQVWPVRQVRPVTEKLPANHPLLTGQRVLDALFPCVQGGTTAIPGAFGCGKTVISQSLSKYSNSDVIIYVGCGERVNEMSEVLRDFPELTMEVDGKVESIMKRTALVANTSNMPVAAREASIYTGITLSEYFRDMGYHVSMMANSTSRWAEALREISGRLAEMPADSGYPAYLGARLASFYERAGRVKCLGNPEREGSVTIVGAVSPPGGDFSDPVTSATLGIVQVFWGLDKKLAQRKHFPSVNWLISYSKYMRALDEYYDKHFTEFVPLRTKAKEILQEEEDLAEIVQLVGKASLAETDKITLEVAKLIKDDFLQQNGYTPYDRFCPFYKTVGMLSNMIAFYDLARRAVETTAQSDNKITWSIIREHMGEILYKLSSMKFKDPVKDGEAKIKADYAQLLEDVQNAFRSLED.

Thr136 bears the Phosphothreonine mark. 250 to 257 (GAFGCGKT) serves as a coordination point for ATP. Phosphoserine; by AMPK is present on Ser384.

This sequence belongs to the ATPase alpha/beta chains family. V-ATPase is a heteromultimeric enzyme made up of two complexes: the ATP-hydrolytic V1 complex and the proton translocation V0 complex. The V1 complex consists of three catalytic AB heterodimers that form a heterohexamer, three peripheral stalks each consisting of EG heterodimers, one central rotor including subunits D and F, and the regulatory subunits C and H. The proton translocation complex V0 consists of the proton transport subunit a, a ring of proteolipid subunits c9c'', rotary subunit d, subunits e and f, and the accessory subunits ATP6AP1/Ac45 and ATP6AP2/PRR. Interacts with the V0 complex V-ATPase subunit a4 ATP6V0A4. Interacts with WFS1. Interacts with alpha-crystallin B chain/CRYAB and with MTOR, forming a ternary complex. In terms of processing, phosphorylation at Ser-384 by AMPK down-regulates its enzyme activity.

Its subcellular location is the cytoplasm. It is found in the cytosol. The protein localises to the cytoplasmic vesicle. It localises to the secretory vesicle. The protein resides in the clathrin-coated vesicle membrane. Its subcellular location is the lysosome. The catalysed reaction is ATP + H2O + 4 H(+)(in) = ADP + phosphate + 5 H(+)(out). ATP hydrolysis occurs at the interface between the nucleotide-binding domains of subunits A and B. ATP hydrolysis triggers a conformational change in the subunits D and F, which induces a shift of subunit d. The c-ring is subsequently rotated and results in a continuous proton translocation across the membrane. Its function is as follows. Catalytic subunit of the V1 complex of vacuolar(H+)-ATPase (V-ATPase), a multisubunit enzyme composed of a peripheral complex (V1) that hydrolyzes ATP and a membrane integral complex (V0) that translocates protons. V-ATPase is responsible for acidifying and maintaining the pH of intracellular compartments and in some cell types, is targeted to the plasma membrane, where it is responsible for acidifying the extracellular environment. In aerobic conditions, involved in intracellular iron homeostasis, thus triggering the activity of Fe(2+) prolyl hydroxylase (PHD) enzymes, and leading to HIF1A hydroxylation and subsequent proteasomal degradation. May play a role in neurite development and synaptic connectivity. The polypeptide is V-type proton ATPase catalytic subunit A (ATP6V1A) (Sus scrofa (Pig)).